We begin with the raw amino-acid sequence, 35 residues long: Photosystem II reaction center protein T (35 aa).

The chain crosses the membrane as a helical span at residues 3–23 (ALVYTFLLVSTLGILFFAIFF).

Belongs to the PsbT family. PSII is composed of 1 copy each of membrane proteins PsbA, PsbB, PsbC, PsbD, PsbE, PsbF, PsbH, PsbI, PsbJ, PsbK, PsbL, PsbM, PsbT, PsbY, PsbZ, Psb30/Ycf12, at least 3 peripheral proteins of the oxygen-evolving complex and a large number of cofactors. It forms dimeric complexes.

The protein localises to the plastid. Its subcellular location is the chloroplast thylakoid membrane. Found at the monomer-monomer interface of the photosystem II (PS II) dimer, plays a role in assembly and dimerization of PSII. PSII is a light-driven water plastoquinone oxidoreductase, using light energy to abstract electrons from H(2)O, generating a proton gradient subsequently used for ATP formation. The chain is Photosystem II reaction center protein T from Gnetum gnemon (Spanish joint-fir).